The primary structure comprises 762 residues: cGMP-dependent protein kinase 2 (762 aa).

A disordered region spans residues 1-25 (MGNGSVKPKHSKHPDGHSGNLTTDA). A lipid anchor (N-myristoyl glycine) is attached at Gly-2. The stretch at 23-85 (TDALRNKVTE…CIQLNKLQDV (63 aa)) forms a coiled coil. A phosphoserine mark is found at Ser-110 and Ser-117. The disordered stretch occupies residues 117–138 (SRRGAKAGVSAEPTTRTYDLNK). Residues 168–283 (FLKRLDPQQI…DEQYRNFLRS (116 aa)) are cGMP-binding, high affinity; cAMP-binding, moderate affinity. Residues 232–235 (GELA) and 242–243 (RT) each bind 3',5'-cyclic AMP. 3',5'-cyclic GMP is bound by residues 232-235 (GELA), 242-243 (RT), Lys-347, 356-359 (GEKA), 366-367 (RS), Asp-412, and Arg-415. Positions 286-416 (LLKNLPEDKL…NLNRDDEKRH (131 aa)) are cGMP-binding, high affinity; cAMP-binding, low affinity. Ser-431 is modified (phosphoserine). The region spanning 453 to 711 (LEIIATLGVG…INDIKKHRWL (259 aa)) is the Protein kinase domain. ATP is bound by residues 459–467 (LGVGGFGRV) and Lys-482. Asp-576 functions as the Proton acceptor in the catalytic mechanism. Phosphothreonine is present on Thr-609. Residues 712-762 (NGFNWEGLKARSLPSPLQRELKGPIDHSYFDKYPPEKGMPPDELSGWDKDF) form the AGC-kinase C-terminal domain. Positions 740–762 (YFDKYPPEKGMPPDELSGWDKDF) are disordered.

The protein belongs to the protein kinase superfamily. AGC Ser/Thr protein kinase family. cGMP subfamily. In terms of assembly, interacts with GRIA1/GLUR1. Post-translationally, myristoylation mediates membrane localization. In terms of tissue distribution, highly concentrated in brain, lung and intestinal mucosa.

Its subcellular location is the apical cell membrane. The catalysed reaction is L-seryl-[protein] + ATP = O-phospho-L-seryl-[protein] + ADP + H(+). It catalyses the reaction L-threonyl-[protein] + ATP = O-phospho-L-threonyl-[protein] + ADP + H(+). Binding of cGMP results in enzyme activation. In terms of biological role, crucial regulator of intestinal secretion and bone growth. Phosphorylates and activates CFTR on the plasma membrane. Plays a key role in intestinal secretion by regulating cGMP-dependent translocation of CFTR in jejunum. Acts downstream of NMDAR to activate the plasma membrane accumulation of GRIA1/GLUR1 in synapse and increase synaptic plasticity. Phosphorylates GRIA1/GLUR1 at Ser-863. Acts as a regulator of gene expression and activator of the extracellular signal-regulated kinases MAPK3/ERK1 and MAPK1/ERK2 in mechanically stimulated osteoblasts. Under fluid shear stress, mediates ERK activation and subsequent induction of FOS, FOSL1/FRA1, FOSL2/FRA2 and FOSB that play a key role in the osteoblast anabolic response to mechanical stimulation. The protein is cGMP-dependent protein kinase 2 (PRKG2) of Homo sapiens (Human).